A 275-amino-acid chain; its full sequence is Large ribosomal subunit protein uL2 (275 aa).

The tract at residues 225–275 (MNPIDHPHGGGEGRTSGGRHPVTPWGKPTKGKKTRSNKKTDRLIMRRRQTQ) is disordered.

This sequence belongs to the universal ribosomal protein uL2 family. As to quaternary structure, part of the 50S ribosomal subunit. Forms a bridge to the 30S subunit in the 70S ribosome.

Its function is as follows. One of the primary rRNA binding proteins. Required for association of the 30S and 50S subunits to form the 70S ribosome, for tRNA binding and peptide bond formation. It has been suggested to have peptidyltransferase activity; this is somewhat controversial. Makes several contacts with the 16S rRNA in the 70S ribosome. This chain is Large ribosomal subunit protein uL2, found in Paramagnetospirillum magneticum (strain ATCC 700264 / AMB-1) (Magnetospirillum magneticum).